The primary structure comprises 1651 residues: Roundabout homolog 1 (1651 aa).

The N-terminal stretch at 1 to 25 (MKWKHLPLLVMISLLTLSKKHLLLA) is a signal peptide. At 26 to 897 (QLIPDPEDLE…QQISDVVKQP (872 aa)) the chain is on the extracellular side. The disordered stretch occupies residues 31 to 66 (PEDLERGNDNGTPAPTSDNDDNSLGYTGSRLRQEDF). Residues 39-56 (DNGTPAPTSDNDDNSLGY) show a composition bias toward polar residues. 5 Ig-like C2-type domains span residues 68-164 (PRIV…ASLE), 170-257 (DDFR…ADVT), 262-346 (PSFV…ATLT), 351-446 (PHFV…LEVT), and 455-541 (PVIR…AYIE). Cysteine 89 and cysteine 147 form a disulfide bridge. Asparagine 160 carries an N-linked (GlcNAc...) asparagine glycan. Disulfide bonds link cysteine 191–cysteine 240, cysteine 283–cysteine 330, and cysteine 372–cysteine 428. Asparagine 463 carries N-linked (GlcNAc...) asparagine glycosylation. Cysteine 476 and cysteine 525 are disulfide-bonded. Fibronectin type-III domains lie at 563–657 (APSK…TQDV), 676–773 (VVLH…TLEE), and 778–874 (PPRS…LDSH). 3 N-linked (GlcNAc...) asparagine glycosylation sites follow: asparagine 790, asparagine 820, and asparagine 827. A helical transmembrane segment spans residues 898-918 (AFIAGIGAACWIILMVFSIWL). Residues 919 to 1651 (YRHRKKRNGL…NNEELEETES (733 aa)) are Cytoplasmic-facing. Serine 940 bears the Phosphoserine mark. At threonine 948 the chain carries Phosphothreonine. Tyrosine 1038 bears the Phosphotyrosine mark. At serine 1055 the chain carries Phosphoserine. Residue tyrosine 1073 is modified to Phosphotyrosine. The disordered stretch occupies residues 1086–1107 (NMNNGGGDSSEKHWKPPGQQKQ). At tyrosine 1114 the chain carries Phosphotyrosine. 3 disordered regions span residues 1137–1337 (PYNH…ADME), 1352–1397 (EQTP…DGSF), and 1420–1651 (RRQM…ETES). A compositionally biased stretch (low complexity) spans 1147-1163 (GGSYNSSDRGSSTSGSQ). Residues 1186 to 1196 (LPPPPAHPPPH) show a composition bias toward pro residues. Threonine 1240 is modified (phosphothreonine). The span at 1255 to 1269 (YSHQSTATLTPSPQE) shows a compositional bias: polar residues. Basic and acidic residues predominate over residues 1281-1293 (DLGHMPHPPDRRR). A compositionally biased stretch (pro residues) spans 1296–1307 (VSPPPPPRPISP). Serine 1297 is subject to Phosphoserine. Acidic residues predominate over residues 1322 to 1336 (MDTDAPEEEEDEADM). The span at 1384–1397 (SSGRSSVSSSDGSF) shows a compositional bias: low complexity. Residues 1438–1451 (PRPTSPVSTDSNMS) are compositionally biased toward polar residues. Over residues 1459–1470 (RPTKKQKHQPGH) the composition is skewed to basic residues. Over residues 1480–1490 (LPPPPVPPPAI) the composition is skewed to pro residues. Basic and acidic residues-rich tracts occupy residues 1516–1541 (ARAD…RQVT) and 1549–1573 (DPRE…RDLP). Residues 1592-1601 (FPTSNNPRDP) show a composition bias toward polar residues. Positions 1602–1614 (SSSSSMSSRGSGS) are enriched in low complexity. A compositionally biased stretch (acidic residues) spans 1642–1651 (NNEELEETES).

Belongs to the immunoglobulin superfamily. ROBO family. Homodimer. Dimerization is mediated by the extracellular domain and is independent of SLIT liganding. Interacts with SLIT1. Interacts with SLIT2. Interacts with FLRT3. Interacts with MYO9B (via Rho-GAP domain). In terms of processing, ubiquitinated. May be deubiquitinated by USP33. In terms of tissue distribution, expressed in embryonal brain and spinal cord.

It localises to the cell membrane. Its subcellular location is the cell projection. The protein localises to the axon. The protein resides in the endoplasmic reticulum-Golgi intermediate compartment membrane. Receptor for SLIT1 and SLIT2 that mediates cellular responses to molecular guidance cues in cellular migration, including axonal navigation at the ventral midline of the neural tube and projection of axons to different regions during neuronal development. Interaction with the intracellular domain of FLRT3 mediates axon attraction towards cells expressing NTN1. In axon growth cones, the silencing of the attractive effect of NTN1 by SLIT2 may require the formation of a ROBO1-DCC complex. Plays a role in the regulation of cell migration via its interaction with MYO9B; inhibits MYO9B-mediated stimulation of RHOA GTPase activity, and thereby leads to increased levels of active, GTP-bound RHOA. May be required for lung development. The sequence is that of Roundabout homolog 1 (Robo1) from Rattus norvegicus (Rat).